Here is a 103-residue protein sequence, read N- to C-terminus: Large ribosomal subunit protein bL21 (103 aa).

The protein belongs to the bacterial ribosomal protein bL21 family. In terms of assembly, part of the 50S ribosomal subunit. Contacts protein L20.

Functionally, this protein binds to 23S rRNA in the presence of protein L20. The chain is Large ribosomal subunit protein bL21 from Shewanella piezotolerans (strain WP3 / JCM 13877).